We begin with the raw amino-acid sequence, 101 residues long: MMIVTIEKSLYDRLREEAERRETSVSAVLRQLLLNYFNIEDDTKSYRKENVKNVIIRVGEKEYVRLQVHMKKENELIIKNELKRRGMSVNQLLKNEILLTA.

This is an uncharacterized protein from Sulfolobus islandicus filamentous virus (isolate Iceland/Hveragerdi) (SIFV).